A 621-amino-acid chain; its full sequence is DNA-directed RNA polymerase subunit gamma (621 aa).

Positions 463, 465, and 467 each coordinate Mg(2+).

Belongs to the RNA polymerase beta' chain family. RpoC1 subfamily. In cyanobacteria the RNAP catalytic core is composed of 2 alpha, 1 beta, 1 beta', 1 gamma and 1 omega subunit. When a sigma factor is associated with the core the holoenzyme is formed, which can initiate transcription. It depends on Mg(2+) as a cofactor.

It catalyses the reaction RNA(n) + a ribonucleoside 5'-triphosphate = RNA(n+1) + diphosphate. Its function is as follows. DNA-dependent RNA polymerase catalyzes the transcription of DNA into RNA using the four ribonucleoside triphosphates as substrates. The sequence is that of DNA-directed RNA polymerase subunit gamma from Nostoc commune.